Reading from the N-terminus, the 290-residue chain is Inositol monophosphatase 2 (290 aa).

Glu-83, Asp-103, Ile-105, and Asp-106 together coordinate Mg(2+). Glu-83 lines the substrate pocket. Substrate is bound by residues Ile-105–Thr-108, Gly-207–Ser-209, Gln-226, and Asp-233. Position 233 (Asp-233) interacts with Mg(2+).

Belongs to the inositol monophosphatase superfamily. Homodimer. Requires Mg(2+) as cofactor.

The protein resides in the cytoplasm. The catalysed reaction is a myo-inositol phosphate + H2O = myo-inositol + phosphate. The protein operates within polyol metabolism; myo-inositol biosynthesis; myo-inositol from D-glucose 6-phosphate: step 2/2. Its function is as follows. Can use myo-inositol monophosphates, scylloinositol 1,4-diphosphate, glucose-1-phosphate, beta-glycerophosphate, and 2'-AMP as substrates. Has been implicated as the pharmacological target for lithium Li(+) action in brain. In Rattus norvegicus (Rat), this protein is Inositol monophosphatase 2 (Impa2).